Reading from the N-terminus, the 705-residue chain is UvrABC system protein C (705 aa).

The 80-residue stretch at 16–95 folds into the GIY-YIG domain; that stretch reads ETPGVYRFRD…IKQFDPRFNV (80 aa). The 36-residue stretch at 208 to 243 folds into the UVR domain; sequence GRYLRRLEREMQQAAQAQEYERAARLRDDIGALRRA. A compositionally biased stretch (low complexity) spans 315-332; that stretch reads AASTGTAGSTVPTTTAGS. Disordered stretches follow at residues 315 to 335 and 683 to 705; these read AAST…SQGE and RADA…ETVS.

The protein belongs to the UvrC family. As to quaternary structure, interacts with UvrB in an incision complex.

The protein localises to the cytoplasm. Its function is as follows. The UvrABC repair system catalyzes the recognition and processing of DNA lesions. UvrC both incises the 5' and 3' sides of the lesion. The N-terminal half is responsible for the 3' incision and the C-terminal half is responsible for the 5' incision. This Frankia casuarinae (strain DSM 45818 / CECT 9043 / HFP020203 / CcI3) protein is UvrABC system protein C.